The chain runs to 202 residues: MKVLTARQQQVYDLIRDHIAQTGMPPTRAEIAQQLGFRSPNAAEEHLKALARKGVIEIVSGASRGIRLLMEEETGIPLVGRVAAGEPLLAQEHIECHYQVDPAMFKPSADFLLRVSGMSMKDIGIMDGDLLAVHKTEDVRNGQIVVARIDDEVTVKRLKKQGNMVHLLAENEEFAPIVVDLRQQSFSIEGLAVGVIRNSDWS.

The H-T-H motif DNA-binding region spans 28–48 (RAEIAQQLGFRSPNAAEEHLK). Residues Ser-119 and Lys-156 each act as for autocatalytic cleavage activity in the active site.

Belongs to the peptidase S24 family. In terms of assembly, homodimer.

The catalysed reaction is Hydrolysis of Ala-|-Gly bond in repressor LexA.. Its function is as follows. Represses a number of genes involved in the response to DNA damage (SOS response), including recA and lexA. Binds to the 16 bp palindromic sequence 5'-CTGTATATATATACAG-3'. In the presence of single-stranded DNA, RecA interacts with LexA causing an autocatalytic cleavage which disrupts the DNA-binding part of LexA, leading to derepression of the SOS regulon and eventually DNA repair. The sequence is that of LexA repressor from Pectobacterium carotovorum subsp. carotovorum (strain PC1).